Reading from the N-terminus, the 832-residue chain is Protein monoglycylase TTLL8 (832 aa).

Residues 1–13 (MSCPPTPNPPFRP) are compositionally biased toward pro residues. 2 disordered regions span residues 1-84 (MSCP…QDLS) and 277-304 (GKSKKEEAKNSDPSPKKDPENPDLKLPS). Basic and acidic residues-rich tracts occupy residues 46–59 (QLREASMENGERKK), 66–75 (DGDHKEENKL), and 280–299 (KKEEAKNSDPSPKKDPENPD). The 354-residue stretch at 271-624 (YCSKVKGKSK…RKLDRNCDIG (354 aa)) folds into the TTL domain. ATP is bound by residues Lys-397, 403-404 (RG), 435-438 (QKYI), 448-450 (KFD), and 492-493 (CN). Arg-403 contributes to the a protein binding site. Position 495 (Ser-495) interacts with L-glutamate. Mg(2+) contacts are provided by Asp-570, Glu-583, and Asn-585. Glu-583 is a binding site for ATP.

Mg(2+) is required as a cofactor. In terms of tissue distribution, highly expressed in testis. Expressed in brain, heart, kidney, liver, lung, muscle, spleen and trachea. Expressed in sperm flagellum. In the brain, specifically expressed in ependymal cilia.

The protein resides in the cytoplasm. It is found in the cytoskeleton. The protein localises to the cell projection. Its subcellular location is the cilium. It localises to the cilium axoneme. The protein resides in the flagellum axoneme. It catalyses the reaction L-glutamyl-[protein] + glycine + ATP = glycyl-L-glutamyl-[protein] + ADP + phosphate + H(+). In terms of biological role, monoglycylase which modifies both tubulin and non-tubulin proteins, adding a single glycine on the gamma-carboxyl groups of specific glutamate residues to generate monoglycine side chains within the C-terminal tail of target proteins. Not involved in elongation step of the polyglycylation reaction. Preferentially monoglycylates alpha-tubulin over beta-tubulin. Together with TTLL3, mediates microtubule glycylation of primary and motile cilia, which is essential for their stability and maintenance. Together with TTLL3, glycylates sperm flagella which regulates axonemal dynein motor activity, thereby controlling flagellar beat, directional sperm swimming and male fertility. Monoglycylates non-tubulin proteins such as ANP32A, ANP32B, SET, NCL and NAP1. The polypeptide is Protein monoglycylase TTLL8 (Mus musculus (Mouse)).